A 211-amino-acid polypeptide reads, in one-letter code: CASP-like protein 1B1 (211 aa).

Residues 1–29 (MDLERGSKTPPSSAPAAAAATTTTSTCCS) form a disordered region. The Cytoplasmic portion of the chain corresponds to 1–55 (MDLERGSKTPPSSAPAAAAATTTTSTCCSNKRPQLRDRLVALQPVVLRAAATLAT). The segment covering 9–26 (TPPSSAPAAAAATTTTST) has biased composition (low complexity). A helical transmembrane segment spans residues 56–76 (AVAAAVMALNAQSYTAVVAIV). The Extracellular portion of the chain corresponds to 77 to 94 (GTRPLTQTFTTKFRDTPA). The helical transmembrane segment at 95–115 (FVYFVIANAIAAVYNLVMLLF) threads the bilayer. Residues 116–123 (RCLILRRR) lie on the Cytoplasmic side of the membrane. Residues 124–144 (MAGLVVHMLDMVIMALLATGA) form a helical membrane-spanning segment. Topologically, residues 145–176 (ATAAAMAELGKNGNVHARWNPICDRFGSFCSR) are extracellular. The chain crosses the membrane as a helical span at residues 177–197 (GGVALASSFTGVALMLALNLL). At 198–211 (SAASNAQCSPGQYE) the chain is on the cytoplasmic side.

This sequence belongs to the Casparian strip membrane proteins (CASP) family. Homodimer and heterodimers.

Its subcellular location is the cell membrane. The polypeptide is CASP-like protein 1B1 (Sorghum bicolor (Sorghum)).